A 243-amino-acid polypeptide reads, in one-letter code: Proteasome subunit beta (243 aa).

Basic and acidic residues-rich tracts occupy residues M1 to G11 and N33 to K47. Positions M1 to G49 are cleaved as a propeptide — removed in mature form; by autocatalysis. The disordered stretch occupies residues M1–T50. Residue T50 is the Nucleophile of the active site. The residue at position 129 (S129) is a Phosphoserine.

This sequence belongs to the peptidase T1B family. In terms of assembly, the 20S proteasome core is composed of 14 alpha and 14 beta subunits that assemble into four stacked heptameric rings, resulting in a barrel-shaped structure. The two inner rings, each composed of seven catalytic beta subunits, are sandwiched by two outer rings, each composed of seven alpha subunits. H.volcanii produces at least 2 types of 20S proteasomes: an alpha1-beta proteasome and a proteasome containing all three subunits (alpha1, alpha2, and beta) that appears to be asymmetrical with homo-oligomeric alpha1 and alpha2 rings positioned on separate ends. The catalytic chamber with the active sites is on the inside of the barrel. Has probably a gated structure, the ends of the cylinder being occluded by the N-termini of the alpha-subunits. Is likely capped at one or both ends by the proteasome regulatory ATPase, PAN.

It localises to the cytoplasm. The catalysed reaction is Cleavage of peptide bonds with very broad specificity.. With respect to regulation, the formation of the proteasomal ATPase PAN-20S proteasome complex, via the docking of the C-termini of PAN into the intersubunit pockets in the alpha-rings, triggers opening of the gate for substrate entry. Interconversion between the open-gate and close-gate conformations leads to a dynamic regulation of the 20S proteasome proteolysis activity. In vitro, the chymotrypsin-like activity of the alpha1-beta proteasome is potently inhibited by carbobenzoxyl-leucinyl-leucinyl-leucinal-H (MG132) and significantly by N-acetyl-leucinyl-leucinyl-norleucinal-H (calpain inhibitor I). Functionally, component of the proteasome core, a large protease complex with broad specificity involved in protein degradation. The H.volcanii alpha1-beta proteasome is able to cleave oligopeptides after Phe, Tyr and Trp, poorly after Glu but not after Arg. Thus, displays chymotrypsin-like activity, low caspase-like activity but no trypsin-like activity. This chain is Proteasome subunit beta, found in Haloferax volcanii (strain ATCC 29605 / DSM 3757 / JCM 8879 / NBRC 14742 / NCIMB 2012 / VKM B-1768 / DS2) (Halobacterium volcanii).